The following is a 115-amino-acid chain: Large ribosomal subunit protein bL20 (115 aa).

The protein belongs to the bacterial ribosomal protein bL20 family.

Its function is as follows. Binds directly to 23S ribosomal RNA and is necessary for the in vitro assembly process of the 50S ribosomal subunit. It is not involved in the protein synthesizing functions of that subunit. The polypeptide is Large ribosomal subunit protein bL20 (Chlorobium limicola (strain DSM 245 / NBRC 103803 / 6330)).